A 296-amino-acid chain; its full sequence is 5,10-methylenetetrahydrofolate reductase (296 aa).

Catalysis depends on E28, which acts as the Proton donor/acceptor. T59 contacts NADH. FAD contacts are provided by Y60, A62, H88, R118, G119, D120, A132, Y152, H156, A159, D165, N168, R171, and K172. Position 120 (D120) interacts with (6S)-5-methyl-5,6,7,8-tetrahydrofolate. Position 183 (Q183) interacts with NADH. Residues Q183, Q219, and R279 each contribute to the (6S)-5-methyl-5,6,7,8-tetrahydrofolate site.

Belongs to the methylenetetrahydrofolate reductase family. Homotetramer. FAD serves as cofactor.

It catalyses the reaction (6S)-5-methyl-5,6,7,8-tetrahydrofolate + NAD(+) = (6R)-5,10-methylene-5,6,7,8-tetrahydrofolate + NADH + H(+). Its pathway is one-carbon metabolism; tetrahydrofolate interconversion. The protein operates within amino-acid biosynthesis; L-methionine biosynthesis via de novo pathway. Its function is as follows. Catalyzes the NADH-dependent reduction of 5,10-methylenetetrahydrofolate to 5-methyltetrahydrofolate. Is required to provide the methyl group necessary for methionine synthetase to convert homocysteine to methionine; the methyl group is given by 5-methyltetrahydrofolate. Can also use NADPH as the reductant, but much less effectively than NADH. The protein is 5,10-methylenetetrahydrofolate reductase of Escherichia coli (strain K12).